The primary structure comprises 251 residues: Transmembrane ascorbate-dependent reductase CYB561 (251 aa).

Methionine 1 bears the N-acetylmethionine mark. At 1-16 (MEGGAAASTPAALPYY) the chain is on the cytoplasmic side. Residues 17–37 (VAFSQLLGLTLVAMTGAWLGL) form a helical membrane-spanning segment. The Cytochrome b561 domain occupies 19–220 (FSQLLGLTLV…FGGAVLYILT (202 aa)). Over 38–51 (YRGGIAWESDLQFN) the chain is Vesicular. Residues 52–72 (AHPLCMVIGLIFLQGDALLVY) traverse the membrane as a helical segment. The heme b site is built by histidine 53, arginine 73, and lysine 80. Residues 73–85 (RVFRNEAKRTTKV) lie on the Cytoplasmic side of the membrane. L-ascorbate-binding residues include lysine 80 and lysine 84. The helical transmembrane segment at 86–106 (LHGLLHIFALVIALVGLVAVF) threads the bilayer. Heme b is bound by residues histidine 87, 116 to 119 (DLYS), and histidine 121. Residues 107-124 (DYHRKEGYADLYSLHSWC) lie on the Vesicular side of the membrane. The chain crosses the membrane as a helical span at residues 125 to 145 (GILVFVLYFVQWLVGFSFFLF). Over 146–158 (PGASFSLRSRYRP) the chain is Cytoplasmic. Residue arginine 153 coordinates L-ascorbate. Residues 159–179 (QHIFFGATIFLLSVGTALLGL) traverse the membrane as a helical segment. Residues histidine 160 and glutamate 181 each contribute to the heme b site. At 180-198 (KEALLFKLRDKYSAFEPEG) the chain is on the vesicular side. The helical transmembrane segment at 199–219 (VLANVLGLLLACFGGAVLYIL) threads the bilayer. Residues 220 to 251 (TRADWKRPSQAEEQALSMDFKTLTEGDSPGSQ) lie on the Cytoplasmic side of the membrane. Lysine 225 provides a ligand contact to heme b. The residue at position 247 (serine 247) is a Phosphoserine.

Heme b serves as cofactor.

The protein resides in the cytoplasmic vesicle. It is found in the secretory vesicle. It localises to the chromaffin granule membrane. It catalyses the reaction monodehydro-L-ascorbate radical(out) + L-ascorbate(in) = monodehydro-L-ascorbate radical(in) + L-ascorbate(out). Transmembrane reductase that uses ascorbate as an electron donor in the cytoplasm and transfers electrons across membranes to reduce monodehydro-L-ascorbate radical in the lumen of secretory vesicles. It is therefore involved the regeneration and homeostasis within secretory vesicles of ascorbate which in turn provides reducing equivalents needed to support the activity of intravesicular enzymes. The protein is Transmembrane ascorbate-dependent reductase CYB561 (CYB561) of Pongo abelii (Sumatran orangutan).